Consider the following 532-residue polypeptide: Vesicular acetylcholine transporter (532 aa).

Over 1 to 33 (MESAEPAGQARAAATKLSEAVGAALQEPRRQRR) the chain is Cytoplasmic. A helical transmembrane segment spans residues 34-54 (LVLVIVCVALLLDNMLYMVIV). Over 55–125 (PIVPDYIAHM…PTESEDVKIG (71 aa)) the chain is Lumenal, vesicle. Asn-89 and Asn-96 each carry an N-linked (GlcNAc...) asparagine glycan. The chain crosses the membrane as a helical span at residues 126-146 (VLFASKAILQLLVNPLSGPFI). Residues 147 to 152 (DRMSYD) lie on the Cytoplasmic side of the membrane. Residues 153-173 (VPLLIGLGVMFASTVLFAFAE) form a helical membrane-spanning segment. At 174 to 182 (DYATLFAAR) the chain is on the lumenal, vesicle side. Residues 183–203 (SLQGLGSAFADTSGIAMIADK) form a helical membrane-spanning segment. Residues 204 to 213 (YPEEPERSRA) are Cytoplasmic-facing. A helical transmembrane segment spans residues 214–234 (LGVALAFISFGSLVAPPFGGI). Residues 235-242 (LYEFAGKR) are Lumenal, vesicle-facing. The chain crosses the membrane as a helical span at residues 243-263 (VPFLVLAAVSLFDALLLLAVA). Over 264–289 (KPFSAAARARANLPVGTPIHRLMLDP) the chain is Cytoplasmic. A helical transmembrane segment spans residues 290–310 (YIAVVAGALTTCNIPLAFLEP). At 311-325 (TIATWMKHTMAASEW) the chain is on the lumenal, vesicle side. The chain crosses the membrane as a helical span at residues 326-346 (EMGMAWLPAFVPHVLGVYLTV). The Cytoplasmic segment spans residues 347 to 356 (RLAARYPHLQ). The chain crosses the membrane as a helical span at residues 357–377 (WLYGALGLAVIGASSCIVPAC). Topologically, residues 378-388 (RSFAPLVVSLC) are lumenal, vesicle. Residues 389–409 (GLCFGIALVDTALLPTLAFLV) form a helical membrane-spanning segment. Topologically, residues 410 to 422 (DVRHVSVYGSVYA) are cytoplasmic. The chain crosses the membrane as a helical span at residues 423–443 (IADISYSVAYALGPIVAGHIV). Topologically, residues 444-447 (HSLG) are lumenal, vesicle. Residues 448–468 (FEQLSLGMGLANLLYAPVLLL) traverse the membrane as a helical segment. Residues 469 to 532 (LRNVGLLTRS…DDYNYYYTRS (64 aa)) lie on the Cytoplasmic side of the membrane. The interval 471 to 532 (NVGLLTRSRS…DDYNYYYTRS (62 aa)) is mediates interaction with SEC14L1. The tract at residues 502-523 (RPVSGQDGEPRSPPGPFDACED) is disordered.

Belongs to the major facilitator superfamily. Vesicular transporter family. As to quaternary structure, interacts with SEC14L1. In terms of tissue distribution, peripheral and central cholinergic nervous systems.

It is found in the cytoplasmic vesicle. Its subcellular location is the secretory vesicle. The protein localises to the synaptic vesicle membrane. The catalysed reaction is acetylcholine(out) + 2 H(+)(in) = acetylcholine(in) + 2 H(+)(out). It carries out the reaction choline(in) + 2 H(+)(out) = choline(out) + 2 H(+)(in). It catalyses the reaction serotonin(in) + 2 H(+)(out) = serotonin(out) + 2 H(+)(in). Its activity is regulated as follows. Potently inhibited by L-vesamicol, reserpine and tetrabenazine. In terms of biological role, electrogenic antiporter that exchanges one cholinergic neurotransmitter, acetylcholine or choline, with two intravesicular protons across the membrane of synaptic vesicles. Uses the electrochemical proton gradient established by the V-type proton-pump ATPase to store neurotransmitters inside the vesicles prior to their release via exocytosis. Determines cholinergic vesicular quantal size at presynaptic nerve terminals in developing neuro-muscular junctions with an impact on motor neuron differentiation and innervation pattern. Part of forebrain cholinergic system, regulates hippocampal synapse transmissions that underlie spatial memory formation. Can transport serotonin. This is Vesicular acetylcholine transporter (SLC18A3) from Homo sapiens (Human).